The chain runs to 74 residues: Large ribosomal subunit protein uL29 (74 aa).

This sequence belongs to the universal ribosomal protein uL29 family.

This is Large ribosomal subunit protein uL29 from Nostoc sp. (strain PCC 7120 / SAG 25.82 / UTEX 2576).